A 203-amino-acid chain; its full sequence is Outer-membrane lipoprotein LolB (203 aa).

Positions 1–17 (MNRLFRLLPLASLVLTA) are cleaved as a signal peptide. C18 is lipidated: N-palmitoyl cysteine. Residue C18 is the site of S-diacylglycerol cysteine attachment.

The protein belongs to the LolB family. Monomer.

It is found in the cell outer membrane. Its function is as follows. Plays a critical role in the incorporation of lipoproteins in the outer membrane after they are released by the LolA protein. The protein is Outer-membrane lipoprotein LolB of Klebsiella pneumoniae subsp. pneumoniae (strain ATCC 700721 / MGH 78578).